The sequence spans 437 residues: UDP-N-acetylmuramate--L-alanine ligase (437 aa).

Position 114-120 (114-120) interacts with ATP; sequence GTHGKTS.

It belongs to the MurCDEF family.

It localises to the cytoplasm. The enzyme catalyses UDP-N-acetyl-alpha-D-muramate + L-alanine + ATP = UDP-N-acetyl-alpha-D-muramoyl-L-alanine + ADP + phosphate + H(+). It functions in the pathway cell wall biogenesis; peptidoglycan biosynthesis. Functionally, cell wall formation. This chain is UDP-N-acetylmuramate--L-alanine ligase, found in Lactobacillus gasseri (strain ATCC 33323 / DSM 20243 / BCRC 14619 / CIP 102991 / JCM 1131 / KCTC 3163 / NCIMB 11718 / NCTC 13722 / AM63).